A 227-amino-acid chain; its full sequence is Cytochrome c oxidase subunit 2 (227 aa).

At Met-1 to Ser-14 the chain is on the mitochondrial intermembrane side. Residues Pro-15–Thr-45 form a helical membrane-spanning segment. Residues Leu-46–Gln-59 are Mitochondrial matrix-facing. The chain crosses the membrane as a helical span at residues Glu-60–Thr-87. Over Asp-88–Leu-227 the chain is Mitochondrial intermembrane. Cu cation contacts are provided by His-161, Cys-196, Glu-198, Cys-200, His-204, and Met-207. Glu-198 contributes to the Mg(2+) binding site.

Belongs to the cytochrome c oxidase subunit 2 family. Component of the cytochrome c oxidase (complex IV, CIV), a multisubunit enzyme composed of 14 subunits. The complex is composed of a catalytic core of 3 subunits MT-CO1, MT-CO2 and MT-CO3, encoded in the mitochondrial DNA, and 11 supernumerary subunits COX4I, COX5A, COX5B, COX6A, COX6B, COX6C, COX7A, COX7B, COX7C, COX8 and NDUFA4, which are encoded in the nuclear genome. The complex exists as a monomer or a dimer and forms supercomplexes (SCs) in the inner mitochondrial membrane with NADH-ubiquinone oxidoreductase (complex I, CI) and ubiquinol-cytochrome c oxidoreductase (cytochrome b-c1 complex, complex III, CIII), resulting in different assemblies (supercomplex SCI(1)III(2)IV(1) and megacomplex MCI(2)III(2)IV(2)). Found in a complex with TMEM177, COA6, COX18, COX20, SCO1 and SCO2. Interacts with TMEM177 in a COX20-dependent manner. Interacts with COX20. Interacts with COX16. The cofactor is Cu cation.

It localises to the mitochondrion inner membrane. The enzyme catalyses 4 Fe(II)-[cytochrome c] + O2 + 8 H(+)(in) = 4 Fe(III)-[cytochrome c] + 2 H2O + 4 H(+)(out). Functionally, component of the cytochrome c oxidase, the last enzyme in the mitochondrial electron transport chain which drives oxidative phosphorylation. The respiratory chain contains 3 multisubunit complexes succinate dehydrogenase (complex II, CII), ubiquinol-cytochrome c oxidoreductase (cytochrome b-c1 complex, complex III, CIII) and cytochrome c oxidase (complex IV, CIV), that cooperate to transfer electrons derived from NADH and succinate to molecular oxygen, creating an electrochemical gradient over the inner membrane that drives transmembrane transport and the ATP synthase. Cytochrome c oxidase is the component of the respiratory chain that catalyzes the reduction of oxygen to water. Electrons originating from reduced cytochrome c in the intermembrane space (IMS) are transferred via the dinuclear copper A center (CU(A)) of subunit 2 and heme A of subunit 1 to the active site in subunit 1, a binuclear center (BNC) formed by heme A3 and copper B (CU(B)). The BNC reduces molecular oxygen to 2 water molecules using 4 electrons from cytochrome c in the IMS and 4 protons from the mitochondrial matrix. The protein is Cytochrome c oxidase subunit 2 (MT-CO2) of Macaca fascicularis (Crab-eating macaque).